Reading from the N-terminus, the 390-residue chain is Mannitol-1-phosphate 5-dehydrogenase (390 aa).

NAD(+) is bound at residue 7-18 (AVHFGGGNIGRG). The active site involves Lys216.

It belongs to the mannitol dehydrogenase family. As to quaternary structure, monomer.

It catalyses the reaction D-mannitol 1-phosphate + NAD(+) = beta-D-fructose 6-phosphate + NADH + H(+). Its function is as follows. Catalyzes the NAD(H)-dependent interconversion of D-fructose 6-phosphate and D-mannitol 1-phosphate in the mannitol metabolic pathway. Required for the process of sporulation on senescing leaf material. The sequence is that of Mannitol-1-phosphate 5-dehydrogenase (mpd1) from Phaeosphaeria nodorum (strain SN15 / ATCC MYA-4574 / FGSC 10173) (Glume blotch fungus).